We begin with the raw amino-acid sequence, 180 residues long: Large ribosomal subunit protein uL5 (180 aa).

It belongs to the universal ribosomal protein uL5 family. Part of the 50S ribosomal subunit; part of the 5S rRNA/L5/L18/L25 subcomplex. Contacts the 5S rRNA and the P site tRNA. Forms a bridge to the 30S subunit in the 70S ribosome.

Functionally, this is one of the proteins that bind and probably mediate the attachment of the 5S RNA into the large ribosomal subunit, where it forms part of the central protuberance. In the 70S ribosome it contacts protein S13 of the 30S subunit (bridge B1b), connecting the 2 subunits; this bridge is implicated in subunit movement. Contacts the P site tRNA; the 5S rRNA and some of its associated proteins might help stabilize positioning of ribosome-bound tRNAs. The chain is Large ribosomal subunit protein uL5 from Streptococcus thermophilus (strain CNRZ 1066).